A 94-amino-acid polypeptide reads, in one-letter code: Aspartyl/glutamyl-tRNA(Asn/Gln) amidotransferase subunit C (94 aa).

The protein belongs to the GatC family. In terms of assembly, heterotrimer of A, B and C subunits.

It carries out the reaction L-glutamyl-tRNA(Gln) + L-glutamine + ATP + H2O = L-glutaminyl-tRNA(Gln) + L-glutamate + ADP + phosphate + H(+). The enzyme catalyses L-aspartyl-tRNA(Asn) + L-glutamine + ATP + H2O = L-asparaginyl-tRNA(Asn) + L-glutamate + ADP + phosphate + 2 H(+). Its function is as follows. Allows the formation of correctly charged Asn-tRNA(Asn) or Gln-tRNA(Gln) through the transamidation of misacylated Asp-tRNA(Asn) or Glu-tRNA(Gln) in organisms which lack either or both of asparaginyl-tRNA or glutaminyl-tRNA synthetases. The reaction takes place in the presence of glutamine and ATP through an activated phospho-Asp-tRNA(Asn) or phospho-Glu-tRNA(Gln). This chain is Aspartyl/glutamyl-tRNA(Asn/Gln) amidotransferase subunit C, found in Campylobacter jejuni subsp. jejuni serotype O:6 (strain 81116 / NCTC 11828).